A 261-amino-acid chain; its full sequence is MNEPLKTIRETKPLIHHITNWVTIYECANMTRAFGALPVMAHAPEECADMTKISSALVLNIGTLTSEIIDSMLLSAAAANERDIPVVLDAVGVGATKFRDEMAAKILASVHIDIIKGNYSEIAKLAGENAETKGVEATSIDADPAKVAKAFAKAESCVVVMTGKEDIISDGDRTFIVKNGHELMGSIVGTGCMAASIVGLFAAVNRDYCDAAKDALCYFGASGELAAAKSSGPGSFKVHLYDEVFNLSDEKVKSMKNFEEK.

M40 provides a ligand contact to substrate. ATP is bound by residues K116 and T162. A substrate-binding site is contributed by G189.

This sequence belongs to the Thz kinase family. Mg(2+) is required as a cofactor.

The catalysed reaction is 5-(2-hydroxyethyl)-4-methylthiazole + ATP = 4-methyl-5-(2-phosphooxyethyl)-thiazole + ADP + H(+). It functions in the pathway cofactor biosynthesis; thiamine diphosphate biosynthesis; 4-methyl-5-(2-phosphoethyl)-thiazole from 5-(2-hydroxyethyl)-4-methylthiazole: step 1/1. In terms of biological role, catalyzes the phosphorylation of the hydroxyl group of 4-methyl-5-beta-hydroxyethylthiazole (THZ). The polypeptide is Hydroxyethylthiazole kinase (Methanosarcina acetivorans (strain ATCC 35395 / DSM 2834 / JCM 12185 / C2A)).